Consider the following 804-residue polypeptide: G-type lectin S-receptor-like serine/threonine-protein kinase At1g61490 (804 aa).

Residues 1–24 form the signal peptide; sequence MGKKRIVFFACLLLFTVLLRFSYA. A Bulb-type lectin domain is found at 25 to 144; the sequence is GITTESPLSV…ASGRTLWESF (120 aa). Over 25–425 the chain is Extracellular; the sequence is GITTESPLSV…SELGGNKRNK (401 aa). Residues Asn53, Asn94, Asn117, Asn134, Asn236, and Asn267 are each glycosylated (N-linked (GlcNAc...) asparagine). The region spanning 278–314 is the EGF-like domain; that stretch reads PANSCDIYGVCGPFGLCIVSVPLKCKCLKGFVPHSTE. Cystine bridges form between Cys282-Cys294 and Cys288-Cys302. N-linked (GlcNAc...) asparagine glycosylation is found at Asn320, Asn336, and Asn375. A PAN domain is found at 333 to 415; sequence CQGNSTGKDV…GEILSIRLAH (83 aa). Cystine bridges form between Cys368–Cys389 and Cys372–Cys378. A helical membrane pass occupies residues 426–446; that stretch reads IIVASTVSLSLFVILTSAAFG. Residues 447–804 are Cytoplasmic-facing; sequence FWRYRVKHKA…EMTQSMILGR (358 aa). Positions 490-775 constitute a Protein kinase domain; that stretch reads FSLSNKLGQG…DLPSPKQPTF (286 aa). Residues 496–504 and Lys518 each bind ATP; that span reads LGQGGFGSV. 2 positions are modified to phosphoserine: Ser524 and Ser539. The segment at 579-596 is caM-binding; sequence RKKLEVDWPKRFDIVQGI. Asp615 (proton acceptor) is an active-site residue. Phosphoserine is present on residues Ser619 and Ser632. Phosphothreonine is present on Thr649. Ser692 carries the post-translational modification Phosphoserine.

The protein belongs to the protein kinase superfamily. Ser/Thr protein kinase family.

It localises to the cell membrane. It catalyses the reaction L-seryl-[protein] + ATP = O-phospho-L-seryl-[protein] + ADP + H(+). The catalysed reaction is L-threonyl-[protein] + ATP = O-phospho-L-threonyl-[protein] + ADP + H(+). In Arabidopsis thaliana (Mouse-ear cress), this protein is G-type lectin S-receptor-like serine/threonine-protein kinase At1g61490.